The chain runs to 304 residues: Glycine--tRNA ligase alpha subunit (304 aa).

The protein belongs to the class-II aminoacyl-tRNA synthetase family. In terms of assembly, tetramer of two alpha and two beta subunits.

Its subcellular location is the cytoplasm. It catalyses the reaction tRNA(Gly) + glycine + ATP = glycyl-tRNA(Gly) + AMP + diphosphate. This Streptococcus agalactiae serotype Ia (strain ATCC 27591 / A909 / CDC SS700) protein is Glycine--tRNA ligase alpha subunit.